The following is a 172-amino-acid chain: Nicotinamide-nucleotide adenylyltransferase (172 aa).

The protein belongs to the archaeal NMN adenylyltransferase family.

The protein resides in the cytoplasm. It carries out the reaction beta-nicotinamide D-ribonucleotide + ATP + H(+) = diphosphate + NAD(+). Its pathway is cofactor biosynthesis; NAD(+) biosynthesis; NAD(+) from nicotinamide D-ribonucleotide: step 1/1. The polypeptide is Nicotinamide-nucleotide adenylyltransferase (Aeropyrum pernix (strain ATCC 700893 / DSM 11879 / JCM 9820 / NBRC 100138 / K1)).